The chain runs to 162 residues: NADH-quinone oxidoreductase subunit I (162 aa).

4Fe-4S ferredoxin-type domains are found at residues 54–83 and 93–122; these read RRYE…IESE and TRYD…ETQI. Residues Cys-63, Cys-66, Cys-69, Cys-73, Cys-102, Cys-105, Cys-108, and Cys-112 each contribute to the [4Fe-4S] cluster site.

The protein belongs to the complex I 23 kDa subunit family. NDH-1 is composed of 14 different subunits. Subunits NuoA, H, J, K, L, M, N constitute the membrane sector of the complex. Requires [4Fe-4S] cluster as cofactor.

The protein resides in the cell inner membrane. It carries out the reaction a quinone + NADH + 5 H(+)(in) = a quinol + NAD(+) + 4 H(+)(out). NDH-1 shuttles electrons from NADH, via FMN and iron-sulfur (Fe-S) centers, to quinones in the respiratory chain. The immediate electron acceptor for the enzyme in this species is believed to be ubiquinone. Couples the redox reaction to proton translocation (for every two electrons transferred, four hydrogen ions are translocated across the cytoplasmic membrane), and thus conserves the redox energy in a proton gradient. This is NADH-quinone oxidoreductase subunit I from Burkholderia vietnamiensis (strain G4 / LMG 22486) (Burkholderia cepacia (strain R1808)).